A 173-amino-acid polypeptide reads, in one-letter code: Placenta-specific protein 1 (173 aa).

The signal sequence occupies residues 1–23 (MNLRKFLGGTVLVAFMLFSYSEQ).

The protein belongs to the PLAC1 family. As to expression, expressed in placenta.

The protein localises to the secreted. May play a role in placental development. This Mus musculus (Mouse) protein is Placenta-specific protein 1.